A 273-amino-acid polypeptide reads, in one-letter code: 3-methyl-2-oxobutanoate hydroxymethyltransferase (273 aa).

2 residues coordinate Mg(2+): D53 and D92. Residues D53–S54, D92, and K122 each bind 3-methyl-2-oxobutanoate. E124 lines the Mg(2+) pocket. Catalysis depends on E191, which acts as the Proton acceptor.

Belongs to the PanB family. Homodecamer; pentamer of dimers. Mg(2+) serves as cofactor.

The protein resides in the cytoplasm. It catalyses the reaction 3-methyl-2-oxobutanoate + (6R)-5,10-methylene-5,6,7,8-tetrahydrofolate + H2O = 2-dehydropantoate + (6S)-5,6,7,8-tetrahydrofolate. Its pathway is cofactor biosynthesis; (R)-pantothenate biosynthesis; (R)-pantoate from 3-methyl-2-oxobutanoate: step 1/2. Catalyzes the reversible reaction in which hydroxymethyl group from 5,10-methylenetetrahydrofolate is transferred onto alpha-ketoisovalerate to form ketopantoate. The protein is 3-methyl-2-oxobutanoate hydroxymethyltransferase of Bacteroides thetaiotaomicron (strain ATCC 29148 / DSM 2079 / JCM 5827 / CCUG 10774 / NCTC 10582 / VPI-5482 / E50).